A 206-amino-acid polypeptide reads, in one-letter code: Protein GrpE (206 aa).

Positions 1–10 (MTDPDLHQND) are enriched in basic and acidic residues. Residues 1–38 (MTDPDLHQNDPENPAQASEPVVSKPYIMPDDPETGSAE) form a disordered region.

Belongs to the GrpE family. As to quaternary structure, homodimer.

It localises to the cytoplasm. Functionally, participates actively in the response to hyperosmotic and heat shock by preventing the aggregation of stress-denatured proteins, in association with DnaK and GrpE. It is the nucleotide exchange factor for DnaK and may function as a thermosensor. Unfolded proteins bind initially to DnaJ; upon interaction with the DnaJ-bound protein, DnaK hydrolyzes its bound ATP, resulting in the formation of a stable complex. GrpE releases ADP from DnaK; ATP binding to DnaK triggers the release of the substrate protein, thus completing the reaction cycle. Several rounds of ATP-dependent interactions between DnaJ, DnaK and GrpE are required for fully efficient folding. This is Protein GrpE from Bradyrhizobium sp. (strain ORS 278).